The following is a 294-amino-acid chain: Glycine--tRNA ligase alpha subunit (294 aa).

Belongs to the class-II aminoacyl-tRNA synthetase family. As to quaternary structure, tetramer of two alpha and two beta subunits.

The protein localises to the cytoplasm. It catalyses the reaction tRNA(Gly) + glycine + ATP = glycyl-tRNA(Gly) + AMP + diphosphate. The chain is Glycine--tRNA ligase alpha subunit from Nostoc sp. (strain PCC 7120 / SAG 25.82 / UTEX 2576).